The primary structure comprises 381 residues: Dual specificity protein phosphatase 6 (381 aa).

The 119-residue stretch at 30 to 148 (GNEQLLLMDC…FQAEFALHCE (119 aa)) folds into the Rhodanese domain. Positions 176–203 (SSSDIESDLDRDPNSATDSDGSPLSNSQ) are disordered. The span at 189-203 (NSATDSDGSPLSNSQ) shows a compositional bias: polar residues. The Tyrosine-protein phosphatase domain maps to 206–349 (FPVEILPFLY…LLDFERTLGL (144 aa)). The active-site Phosphocysteine intermediate is the cysteine 293.

Belongs to the protein-tyrosine phosphatase family. Non-receptor class dual specificity subfamily. In terms of assembly, interacts with MAPK1/ERK2. Post-translationally, ubiquitinated by the SCF(FBXO31) complex, leading to its proteasomal degradation. As to expression, expressed in lung, heart, brain, and kidney, but not significantly in skeletal muscle or testis.

The protein resides in the cytoplasm. It catalyses the reaction O-phospho-L-tyrosyl-[protein] + H2O = L-tyrosyl-[protein] + phosphate. The catalysed reaction is O-phospho-L-seryl-[protein] + H2O = L-seryl-[protein] + phosphate. It carries out the reaction O-phospho-L-threonyl-[protein] + H2O = L-threonyl-[protein] + phosphate. Dual specificity protein phosphatase, which mediates dephosphorylation and inactivation of MAP kinases. Has a specificity for the ERK family. Implicated in muscle and neuronal differentiation. Plays an important role in alleviating chronic postoperative pain. Necessary for the normal dephosphorylation of the long-lasting phosphorylated forms of spinal MAPK1/3 and MAP kinase p38 induced by peripheral surgery, which drives the resolution of acute postoperative allodynia. Also important for dephosphorylation of MAPK1/3 in local wound tissue, which further contributes to resolution of acute pain. The protein is Dual specificity protein phosphatase 6 (Dusp6) of Rattus norvegicus (Rat).